The sequence spans 31 residues: MSDIN-like toxin proprotein 8 (31 aa).

A propeptide spanning residues 1 to 10 is cleaved from the precursor; that stretch reads MSDINTARLP. The segment at residues 11–18 is a cross-link (cyclopeptide (Cys-Pro)); it reads CIGFLGIP. Residues 19–31 constitute a propeptide that is removed on maturation; that stretch reads SVGDDIEMVLRHG.

Belongs to the MSDIN fungal toxin family. Post-translationally, processed by the macrocyclase-peptidase enzyme POPB to yield a toxic cyclic octapeptide. POPB first removes 10 residues from the N-terminus. Conformational trapping of the remaining peptide forces the enzyme to release this intermediate rather than proceed to macrocyclization. The enzyme rebinds the remaining peptide in a different conformation and catalyzes macrocyclization of the N-terminal 8 residues.

In terms of biological role, probable toxin that belongs to the MSDIN-like toxin family responsible for a large number of food poisoning cases and deaths. This Amanita bisporigera (Destroying angel) protein is MSDIN-like toxin proprotein 8.